A 116-amino-acid polypeptide reads, in one-letter code: Distal membrane-arm assembly complex protein 1 (116 aa).

Positions 1-39 (MGSRLSQPFESYITAPPGTAAAPAKPAPPATPGAPTSPA) are disordered. The span at 14–24 (TAPPGTAAAPA) shows a compositional bias: low complexity. The next 2 membrane-spanning stretches (helical) occupy residues 52–69 (VLSGLGLMGAGGYVYWVA) and 82–104 (WTITQMVIGLSENQGIATWGIVV).

In terms of assembly, interacts with incompletely assembled mitochondrial NADH:ubiquinone oxidoreductase complex (complex I).

It is found in the mitochondrion inner membrane. Required for the assembly of the mitochondrial NADH:ubiquinone oxidoreductase complex (complex I). Involved in the assembly of the distal region of complex I. The sequence is that of Distal membrane-arm assembly complex protein 1 from Homo sapiens (Human).